Consider the following 186-residue polypeptide: Probable GTP-binding protein EngB (186 aa).

Residues 18-186 (DKKEICFIGR…LKKLIGSVIL (169 aa)) form the EngB-type G domain. Residues 26–33 (GRSNVGKS), 52–56 (GRTQL), 69–72 (DLPG), 135–138 (NKAD), and 166–168 (VSA) each bind GTP. S33 and T54 together coordinate Mg(2+).

The protein belongs to the TRAFAC class TrmE-Era-EngA-EngB-Septin-like GTPase superfamily. EngB GTPase family. Requires Mg(2+) as cofactor.

Functionally, necessary for normal cell division and for the maintenance of normal septation. The polypeptide is Probable GTP-binding protein EngB (Malacoplasma penetrans (strain HF-2) (Mycoplasma penetrans)).